A 396-amino-acid polypeptide reads, in one-letter code: MALRTIDALDLAGKRVFIRVDFNVPLDPQGKVTDDARIRAALPTIRHAIQAKAKVILASHLGRPKGKPDDRTKLTLEPAAVRLSELLSQDVILADDCVGDGVKKLVRDLKDGHVLLLENLRFHPEEEKNDEAFARELASLADVWVNDAFGTAHRAHASTAGMAKFVKEKAAGFLVQKEVEYLGKALGSPARPFVAIVGGAKVSDKIKVLENLIAKADAVCVGGAMAYTFLKAQGVPVGRSLVEEDKLELARQILERAEARKVDLLLPVDHVCGAEPKETAERVVVNDRAIPDGLMGLDIGPKTLDRYRQRIAGAKTVFWNGPMGLFEQKPWSEGTFGVAKAMAASPAVTVVGGGDSAAAVEQAGLVDKMKHVSTGGGASLEFIEGRELPGVKACEE.

Residues 21–23 (DFN), Arg37, 60–63 (HLGR), Arg121, and Arg154 contribute to the substrate site. ATP contacts are provided by residues Lys205, Gly296, Glu327, and 353-356 (GGDS).

It belongs to the phosphoglycerate kinase family. In terms of assembly, monomer.

The protein resides in the cytoplasm. The catalysed reaction is (2R)-3-phosphoglycerate + ATP = (2R)-3-phospho-glyceroyl phosphate + ADP. Its pathway is carbohydrate degradation; glycolysis; pyruvate from D-glyceraldehyde 3-phosphate: step 2/5. This Anaeromyxobacter dehalogenans (strain 2CP-C) protein is Phosphoglycerate kinase.